A 395-amino-acid chain; its full sequence is Probable alcohol dehydrogenase EutG (395 aa).

Residues Asp57, 116-120 (GSVLD), 156-160 (TTAGT), Lys178, and 197-201 (VTEGV) each bind NAD(+). Fe cation-binding residues include Asp212, His216, His281, and His295. NAD(+) contacts are provided by His295 and Asp354.

The protein belongs to the iron-containing alcohol dehydrogenase family. Requires Fe cation as cofactor.

Its subcellular location is the bacterial microcompartment. It carries out the reaction ethanol + NAD(+) = acetaldehyde + NADH + H(+). It functions in the pathway amine and polyamine degradation; ethanolamine degradation. Functionally, probably acts on the acetaldehyde produced by the degradation of ethanolamine, producing ethanol. Its function is as follows. Expression of the eut operon allows this bacteria to use ethanolamine (EA) as a carbon, nitrogen and energy source. It relies on cobalamin (vitamin B12) both as a cofactor for the ethanolamine ammonia-lyase (EAL) activity and to induce the operon. EA enhances bacterial survival in macrophages in a concentration-dependent manner, suggesting it is an important nutrient during infection. This Salmonella typhimurium (strain LT2 / SGSC1412 / ATCC 700720) protein is Probable alcohol dehydrogenase EutG.